The primary structure comprises 270 residues: Phosphoserine phosphatase (270 aa).

The active-site Nucleophile is Asp-67. Mg(2+) is bound by residues Asp-67 and Asp-69. Residue Asp-69 is the Proton donor of the active site. Residues Glu-76, Arg-112, 156–157 (SG), and Lys-205 contribute to the substrate site. Asp-227 contacts Mg(2+).

This sequence belongs to the HAD-like hydrolase superfamily. SerB family. Requires Mg(2+) as cofactor.

It catalyses the reaction O-phospho-L-serine + H2O = L-serine + phosphate. It carries out the reaction O-phospho-D-serine + H2O = D-serine + phosphate. Its pathway is amino-acid biosynthesis; L-serine biosynthesis; L-serine from 3-phospho-D-glycerate: step 3/3. In terms of biological role, catalyzes the last step in the biosynthesis of serine from carbohydrates. The reaction mechanism proceeds via the formation of a phosphoryl-enzyme intermediates. The polypeptide is Phosphoserine phosphatase (aay) (Drosophila melanogaster (Fruit fly)).